Consider the following 209-residue polypeptide: uncharacterized protein (209 aa).

The first 17 residues, 1–17 (MKRLVTGLLALSLFLAA), serve as a signal peptide directing secretion. The disordered stretch occupies residues 17–105 (ACGQDSDQQK…SNNQANNNQK (89 aa)). The N-palmitoyl cysteine moiety is linked to residue Cys18. The S-diacylglycerol cysteine moiety is linked to residue Cys18. Residues 23-70 (DQQKDGNKEKDDKAKTEQQDKKTNDSSKDKKDNKDDSKDVNKDNKDNS) show a composition bias toward basic and acidic residues. Positions 71 to 105 (ANDNQQQSNSNATNNDQNQTNNNQSSNNQANNNQK) are enriched in low complexity.

It is found in the cell membrane. This is an uncharacterized protein from Staphylococcus aureus (strain COL).